A 124-amino-acid polypeptide reads, in one-letter code: Histone H2A (124 aa).

The span at M1–S18 shows a compositional bias: basic residues. Positions M1–A21 are disordered. An N-acetylserine modification is found at S2. A Phosphoserine modification is found at S2. The residue at position 36 (K36) is an N6-succinyllysine. Residue Q104 is modified to N5-methylglutamine. A Glycyl lysine isopeptide (Lys-Gly) (interchain with G-Cter in ubiquitin) cross-link involves residue K119. Position 120 is a phosphothreonine (T120).

It belongs to the histone H2A family. The nucleosome is a histone octamer containing two molecules each of H2A, H2B, H3 and H4 assembled in one H3-H4 heterotetramer and two H2A-H2B heterodimers. The octamer wraps approximately 147 bp of DNA. In terms of processing, the chromatin-associated form, but not the free cytoplasmic form, is phosphorylated on Thr-120 by NHK-1 during mitosis, and dephosphorylated during S-phase. Also phosphorylated on Thr-120 by NHK-1 during prophase I of meiosis; which is required for acetylation of H3 'Lys-14' and H4 'Lys-5', diassembly of the synaptonemal complex, and karyosome formation. Post-translationally, monoubiquitination of Lys-119 by sce/dRING gives a specific tag for epigenetic transcriptional repression. Phosphorylation on Ser-2 is enhanced during mitosis. Phosphorylation on Ser-2 directly represses transcription.

It is found in the nucleus. It localises to the chromosome. Its function is as follows. Core component of nucleosome. Nucleosomes wrap and compact DNA into chromatin, limiting DNA accessibility to the cellular machineries which require DNA as a template. Histones thereby play a central role in transcription regulation, DNA repair, DNA replication and chromosomal stability. DNA accessibility is regulated via a complex set of post-translational modifications of histones, also called histone code, and nucleosome remodeling. The protein is Histone H2A (His2A) of Drosophila erecta (Fruit fly).